Reading from the N-terminus, the 319-residue chain is Cobalamin biosynthesis protein CbiB (319 aa).

Helical transmembrane passes span 52 to 74 (IGGG…GVLA), 79 to 101 (IHPW…GRSL), 155 to 177 (GIIA…YKAV), 207 to 229 (YLPA…LSGW), and 296 to 318 (LMWV…LSGV).

It belongs to the CobD/CbiB family.

The protein resides in the cell membrane. It participates in cofactor biosynthesis; adenosylcobalamin biosynthesis; adenosylcobalamin from cob(II)yrinate a,c-diamide: step 4/7. Its function is as follows. Converts cobyric acid to cobinamide by the addition of aminopropanol on the F carboxylic group. However, the true cosubstrate could be (R)-1-amino-2-propanol O-2-phosphate, leading to cobinamide phosphate. This is Cobalamin biosynthesis protein CbiB from Salmonella typhi.